The chain runs to 398 residues: Tryptophan synthase beta chain (398 aa).

Lys92 carries the N6-(pyridoxal phosphate)lysine modification.

This sequence belongs to the TrpB family. Tetramer of two alpha and two beta chains. It depends on pyridoxal 5'-phosphate as a cofactor.

It carries out the reaction (1S,2R)-1-C-(indol-3-yl)glycerol 3-phosphate + L-serine = D-glyceraldehyde 3-phosphate + L-tryptophan + H2O. Its pathway is amino-acid biosynthesis; L-tryptophan biosynthesis; L-tryptophan from chorismate: step 5/5. Functionally, the beta subunit is responsible for the synthesis of L-tryptophan from indole and L-serine. The protein is Tryptophan synthase beta chain of Nitrosospira multiformis (strain ATCC 25196 / NCIMB 11849 / C 71).